Here is a 132-residue protein sequence, read N- to C-terminus: Small ribosomal subunit protein uS11 (132 aa).

This sequence belongs to the universal ribosomal protein uS11 family. Part of the 30S ribosomal subunit. Interacts with proteins S7 and S18. Binds to IF-3.

Located on the platform of the 30S subunit, it bridges several disparate RNA helices of the 16S rRNA. Forms part of the Shine-Dalgarno cleft in the 70S ribosome. The chain is Small ribosomal subunit protein uS11 from Clostridium kluyveri (strain NBRC 12016).